The sequence spans 309 residues: MNRLQVELPGLSLKNPIIPASGCFGFGREYAQFYDLNVLGSIMIKATTEQPRYGNPTPRVAETPGGMLNAIGLQNPGLEKVMGSELPWLEQFDLPIIANVAGSQVEDYVAVAKKISKAPNVHALELNISCPNVKTGGIAFGTNPEIAADLTKRVKEVSEVPVYVKLSPNVTNIVEIAKAIENAGADGLTMINTLLGMRLDLKTAKPILANRTGGLSGPAIKPVAIRMVHEVSQVVDIPIIGMGGIESAEDVIEFFYAGASAVAVGTANFVDPLVCPTIIEELPSLLDELGFGHISECQGRSWKQVCQSR.

FMN-binding positions include serine 21 and 45–46 (KA). Residues lysine 45 and 69–73 (NAIGL) each bind substrate. Residues asparagine 99 and asparagine 127 each coordinate FMN. Substrate is bound at residue asparagine 127. Residue cysteine 130 is the Nucleophile of the active site. The FMN site is built by lysine 165 and isoleucine 191. 192-193 (NT) is a substrate binding site. Residues glycine 217, 243-244 (GG), and 265-266 (GT) contribute to the FMN site.

The protein belongs to the dihydroorotate dehydrogenase family. Type 1 subfamily. As to quaternary structure, heterotetramer of 2 PyrK and 2 PyrD type B subunits. It depends on FMN as a cofactor.

Its subcellular location is the cytoplasm. The enzyme catalyses (S)-dihydroorotate + NAD(+) = orotate + NADH + H(+). Its pathway is pyrimidine metabolism; UMP biosynthesis via de novo pathway; orotate from (S)-dihydroorotate (NAD(+) route): step 1/1. Catalyzes the conversion of dihydroorotate to orotate with NAD(+) as electron acceptor. This chain is Dihydroorotate dehydrogenase B (NAD(+)), catalytic subunit (pyrD), found in Bacillus cytotoxicus (strain DSM 22905 / CIP 110041 / 391-98 / NVH 391-98).